The sequence spans 750 residues: Photosystem I P700 chlorophyll a apoprotein A1 (750 aa).

The next 8 helical transmembrane spans lie at 70-93 (VFSAHFGQLSIIFLWLSGMYFHGA), 156-179 (LYCTAIGALVFAALMLFAGWFHYH), 195-219 (LNHHLAGLLGLGSLSWAGHQVHVSL), 291-309 (IAHHHLAIAILFLIAGHMY), 346-369 (WHAQLALNLAMLGSLTIVVAHHMY), 385-411 (LSLFTHHMWIGGFLIVGAAAHAAIFMV), 433-455 (AIISHLNWVCIFLGFHSFGLYIH), and 531-549 (FLVHHIHAFTIHVTVLILL). Residues cysteine 573 and cysteine 582 each contribute to the [4Fe-4S] cluster site. Transmembrane regions (helical) follow at residues 589–610 (HVFLGLFWMYNAISVVIFHFSW) and 664–686 (LSAYGLFFLGAHFVWAFSLMFLF). Histidine 675 is a chlorophyll a' binding site. 2 residues coordinate chlorophyll a: methionine 683 and tyrosine 691. Phylloquinone is bound at residue tryptophan 692. The chain crosses the membrane as a helical span at residues 724-744 (AVGVTHYLLGGIATTWAFFLA).

The protein belongs to the PsaA/PsaB family. As to quaternary structure, the PsaA/B heterodimer binds the P700 chlorophyll special pair and subsequent electron acceptors. PSI consists of a core antenna complex that captures photons, and an electron transfer chain that converts photonic excitation into a charge separation. The eukaryotic PSI reaction center is composed of at least 11 subunits. Requires P700 is a chlorophyll a/chlorophyll a' dimer, A0 is one or more chlorophyll a, A1 is one or both phylloquinones and FX is a shared 4Fe-4S iron-sulfur center. as cofactor.

The protein localises to the plastid. The protein resides in the chloroplast thylakoid membrane. The catalysed reaction is reduced [plastocyanin] + hnu + oxidized [2Fe-2S]-[ferredoxin] = oxidized [plastocyanin] + reduced [2Fe-2S]-[ferredoxin]. In terms of biological role, psaA and PsaB bind P700, the primary electron donor of photosystem I (PSI), as well as the electron acceptors A0, A1 and FX. PSI is a plastocyanin-ferredoxin oxidoreductase, converting photonic excitation into a charge separation, which transfers an electron from the donor P700 chlorophyll pair to the spectroscopically characterized acceptors A0, A1, FX, FA and FB in turn. Oxidized P700 is reduced on the lumenal side of the thylakoid membrane by plastocyanin. This Nymphaea alba (White water-lily) protein is Photosystem I P700 chlorophyll a apoprotein A1.